Reading from the N-terminus, the 181-residue chain is Oligoribonuclease (181 aa).

One can recognise an Exonuclease domain in the interval 8-171 (LVWIDMEMTG…DDIRESIAEL (164 aa)). Residue Tyr129 is part of the active site.

It belongs to the oligoribonuclease family.

The protein localises to the cytoplasm. Its function is as follows. 3'-to-5' exoribonuclease specific for small oligoribonucleotides. This is Oligoribonuclease from Pseudoalteromonas atlantica (strain T6c / ATCC BAA-1087).